A 62-amino-acid chain; its full sequence is Large ribosomal subunit protein bL28 (62 aa).

This sequence belongs to the bacterial ribosomal protein bL28 family.

This Desulforamulus reducens (strain ATCC BAA-1160 / DSM 100696 / MI-1) (Desulfotomaculum reducens) protein is Large ribosomal subunit protein bL28.